The chain runs to 180 residues: Cytokinin-beta-glucosidase 3 (180 aa).

Functionally, hydrolyzes cytokinin glucosides thus liberating free cytokinins. This Panax ginseng (Korean ginseng) protein is Cytokinin-beta-glucosidase 3 (ROLC3).